Consider the following 278-residue polypeptide: TATA box-binding protein-associated factor RNA polymerase I subunit D (278 aa).

Disordered regions lie at residues 20–71 (ANRS…SSFE) and 88–116 (KKRY…RNPI). Positions 22–33 (RSDNSSDSSLFK) are enriched in polar residues. Phosphoserine is present on Ser23. Basic residues predominate over residues 88 to 99 (KKRYKKKKKRRY). 2 positions are modified to phosphoserine: Ser138 and Ser234.

Component of the transcription factor SL1/TIF-IB complex, composed of TBP and at least TAF1A, TAF1B, TAF1C and TAF1D. Interacts with UBTF.

The protein localises to the nucleus. Component of the transcription factor SL1/TIF-IB complex, which is involved in the assembly of the PIC (preinitiation complex) during RNA polymerase I-dependent transcription. The rate of PIC formation probably is primarily dependent on the rate of association of SL1/TIF-IB with the rDNA promoter. SL1/TIF-IB is involved in stabilization of nucleolar transcription factor 1/UBTF on rDNA. Formation of SL1/TIF-IB excludes the association of TBP with TFIID subunits. This chain is TATA box-binding protein-associated factor RNA polymerase I subunit D (TAF1D), found in Homo sapiens (Human).